The chain runs to 133 residues: MIIDPISDMFTRIRNANLKLHEKVDVPSSKLKLGIAKILKEEGYISNYEIKGIENQTQSVLRIHLRYTSKGKVVLQGIKRISKSSLRIYKGHSDVPRTIGGLGVTIISTSKGLMTDGQARKDKIGGEVIGCVW.

Belongs to the universal ribosomal protein uS8 family. In terms of assembly, part of the 30S ribosomal subunit. Contacts proteins S5 and S12.

Functionally, one of the primary rRNA binding proteins, it binds directly to 16S rRNA central domain where it helps coordinate assembly of the platform of the 30S subunit. The polypeptide is Small ribosomal subunit protein uS8 (Endomicrobium trichonymphae).